Consider the following 434-residue polypeptide: Glutamate-1-semialdehyde 2,1-aminomutase (434 aa).

Position 266 is an N6-(pyridoxal phosphate)lysine (lysine 266).

It belongs to the class-III pyridoxal-phosphate-dependent aminotransferase family. HemL subfamily. As to quaternary structure, homodimer. The cofactor is pyridoxal 5'-phosphate.

It localises to the cytoplasm. The catalysed reaction is (S)-4-amino-5-oxopentanoate = 5-aminolevulinate. It participates in porphyrin-containing compound metabolism; protoporphyrin-IX biosynthesis; 5-aminolevulinate from L-glutamyl-tRNA(Glu): step 2/2. This is Glutamate-1-semialdehyde 2,1-aminomutase from Fusobacterium nucleatum subsp. nucleatum (strain ATCC 25586 / DSM 15643 / BCRC 10681 / CIP 101130 / JCM 8532 / KCTC 2640 / LMG 13131 / VPI 4355).